Consider the following 299-residue polypeptide: Phosphatidylcholine-sterol acyltransferase (299 aa).

N-linked (GlcNAc...) asparagine glycans are attached at residues N28 and N184. An intrachain disulfide couples C225 to C268. Catalysis depends on D257, which acts as the Charge relay system. N285 carries N-linked (GlcNAc...) asparagine glycosylation. H289 serves as the catalytic Charge relay system. An N-linked (GlcNAc...) asparagine glycan is attached at N296.

The protein belongs to the AB hydrolase superfamily. Lipase family.

It localises to the secreted. It catalyses the reaction a sterol + a 1,2-diacyl-sn-glycero-3-phosphocholine = a sterol ester + a 1-acyl-sn-glycero-3-phosphocholine. APOA1 is the most potent activator in plasma. Also activated by APOE, APOC1 and APOA4. Central enzyme in the extracellular metabolism of plasma lipoproteins. Synthesized mainly in the liver and secreted into plasma where it converts cholesterol and phosphatidylcholines (lecithins) to cholesteryl esters and lysophosphatidylcholines on the surface of high and low density lipoproteins (HDLs and LDLs). The cholesterol ester is then transported back to the liver. Has a preference for plasma 16:0-18:2 or 18:O-18:2 phosphatidylcholines. Also produced in the brain by primary astrocytes, and esterifies free cholesterol on nascent APOE-containing lipoproteins secreted from glia and influences cerebral spinal fluid (CSF) APOE- and APOA1 levels. Together with APOE and the cholesterol transporter ABCA1, plays a key role in the maturation of glial-derived, nascent lipoproteins. Required for remodeling high-density lipoprotein particles into their spherical forms. This Micromys minutus (European harvest mouse) protein is Phosphatidylcholine-sterol acyltransferase (LCAT).